We begin with the raw amino-acid sequence, 139 residues long: D-ribose pyranase (139 aa).

The Proton donor role is filled by His20. Substrate is bound by residues Asp28, His106, and 128 to 130 (YAN).

The protein belongs to the RbsD / FucU family. RbsD subfamily. Homodecamer.

The protein localises to the cytoplasm. The catalysed reaction is beta-D-ribopyranose = beta-D-ribofuranose. It participates in carbohydrate metabolism; D-ribose degradation; D-ribose 5-phosphate from beta-D-ribopyranose: step 1/2. Its function is as follows. Catalyzes the interconversion of beta-pyran and beta-furan forms of D-ribose. In Actinobacillus pleuropneumoniae serotype 5b (strain L20), this protein is D-ribose pyranase.